The primary structure comprises 283 residues: Pantothenate synthetase (283 aa).

ATP is bound at residue 30-37 (MGYYHAGH). Histidine 37 (proton donor) is an active-site residue. Residue glutamine 61 participates in (R)-pantoate binding. A beta-alanine-binding site is contributed by glutamine 61. 147 to 150 (GQKD) is a binding site for ATP. Glutamine 153 is a (R)-pantoate binding site. Residues valine 176 and 184–187 (MSSR) each bind ATP.

Belongs to the pantothenate synthetase family. In terms of assembly, homodimer.

It localises to the cytoplasm. The enzyme catalyses (R)-pantoate + beta-alanine + ATP = (R)-pantothenate + AMP + diphosphate + H(+). The protein operates within cofactor biosynthesis; (R)-pantothenate biosynthesis; (R)-pantothenate from (R)-pantoate and beta-alanine: step 1/1. Its function is as follows. Catalyzes the condensation of pantoate with beta-alanine in an ATP-dependent reaction via a pantoyl-adenylate intermediate. The sequence is that of Pantothenate synthetase from Nitratidesulfovibrio vulgaris (strain ATCC 29579 / DSM 644 / CCUG 34227 / NCIMB 8303 / VKM B-1760 / Hildenborough) (Desulfovibrio vulgaris).